The following is a 622-amino-acid chain: Phosphomethylpyrimidine synthase (622 aa).

Residues Asn-226, Met-255, Tyr-284, His-320, 340–342 (SRG), 381–384 (DGLR), and Glu-420 contribute to the substrate site. His-424 contributes to the Zn(2+) binding site. Tyr-447 is a substrate binding site. Zn(2+) is bound at residue His-488. [4Fe-4S] cluster-binding residues include Cys-568, Cys-571, and Cys-576.

The protein belongs to the ThiC family. Homodimer. The cofactor is [4Fe-4S] cluster.

The enzyme catalyses 5-amino-1-(5-phospho-beta-D-ribosyl)imidazole + S-adenosyl-L-methionine = 4-amino-2-methyl-5-(phosphooxymethyl)pyrimidine + CO + 5'-deoxyadenosine + formate + L-methionine + 3 H(+). Its pathway is cofactor biosynthesis; thiamine diphosphate biosynthesis. Its function is as follows. Catalyzes the synthesis of the hydroxymethylpyrimidine phosphate (HMP-P) moiety of thiamine from aminoimidazole ribotide (AIR) in a radical S-adenosyl-L-methionine (SAM)-dependent reaction. This Ruthia magnifica subsp. Calyptogena magnifica protein is Phosphomethylpyrimidine synthase.